The sequence spans 290 residues: Ribosomal large subunit pseudouridine synthase B (290 aa).

The region spanning Glu3 to Pro75 is the S4 RNA-binding domain. Asp110 serves as the catalytic Nucleophile. The interval Val256–Gly290 is disordered.

Belongs to the pseudouridine synthase RsuA family.

It catalyses the reaction uridine(2605) in 23S rRNA = pseudouridine(2605) in 23S rRNA. Responsible for synthesis of pseudouridine from uracil-2605 in 23S ribosomal RNA. The chain is Ribosomal large subunit pseudouridine synthase B (rluB) from Escherichia coli O157:H7.